The primary structure comprises 183 residues: ATP-dependent protease subunit HslV (183 aa).

Threonine 13 is an active-site residue. Na(+)-binding residues include glycine 168, cysteine 171, and threonine 174.

The protein belongs to the peptidase T1B family. HslV subfamily. As to quaternary structure, a double ring-shaped homohexamer of HslV is capped on each side by a ring-shaped HslU homohexamer. The assembly of the HslU/HslV complex is dependent on binding of ATP.

It is found in the cytoplasm. It carries out the reaction ATP-dependent cleavage of peptide bonds with broad specificity.. Its activity is regulated as follows. Allosterically activated by HslU binding. Functionally, protease subunit of a proteasome-like degradation complex believed to be a general protein degrading machinery. The sequence is that of ATP-dependent protease subunit HslV from Xanthomonas axonopodis pv. citri (strain 306).